The sequence spans 278 residues: Transmembrane protein 41B (278 aa).

The disordered stretch occupies residues 1 to 31; sequence MQVHERSHTGGHTFQCNHGNEKKAPAAGKVH. Helical transmembrane passes span 39 to 59, 96 to 116, 142 to 162, 184 to 204, 212 to 232, and 249 to 269; these read MSLL…FLVY, FYVE…TFAI, CSGL…RPVV, LINY…FINI, PLKV…FVAI, and SWNS…PAIF. Residues 127 to 238 are VTT domain; required for its function in autophagy; it reads GFLYPFPLAL…FVAIKAGTTL (112 aa).

It belongs to the TMEM41 family.

The protein resides in the endoplasmic reticulum membrane. The protein localises to the endomembrane system. It carries out the reaction a 1,2-diacyl-sn-glycero-3-phospho-L-serine(in) = a 1,2-diacyl-sn-glycero-3-phospho-L-serine(out). The enzyme catalyses cholesterol(in) = cholesterol(out). It catalyses the reaction a 1,2-diacyl-sn-glycero-3-phosphocholine(in) = a 1,2-diacyl-sn-glycero-3-phosphocholine(out). The catalysed reaction is a 1,2-diacyl-sn-glycero-3-phosphoethanolamine(in) = a 1,2-diacyl-sn-glycero-3-phosphoethanolamine(out). Its function is as follows. Phospholipid scramblase involved in lipid homeostasis and membrane dynamics processes. Has phospholipid scramblase activity toward cholesterol and phosphatidylserine, as well as phosphatidylethanolamine and phosphatidylcholine. Required for autophagosome formation: participates in early stages of autophagosome biogenesis at the endoplasmic reticulum (ER) membrane by reequilibrating the leaflets of the ER as lipids are extracted by atg2 (atg2a or atg2b) to mediate autophagosome assembly. In addition to autophagy, involved in other processes in which phospholipid scramblase activity is required. Required for normal motor neuron development. The chain is Transmembrane protein 41B from Xenopus laevis (African clawed frog).